Reading from the N-terminus, the 75-residue chain is Small ribosomal subunit protein bS16c (75 aa).

This sequence belongs to the bacterial ribosomal protein bS16 family.

The protein localises to the plastid. The protein resides in the chloroplast. The polypeptide is Small ribosomal subunit protein bS16c (Cyanidioschyzon merolae (strain NIES-3377 / 10D) (Unicellular red alga)).